The following is a 503-amino-acid chain: Arabinose import ATP-binding protein AraG (503 aa).

2 consecutive ABC transporter domains span residues 5 to 240 (LRFD…MVGR) and 253 to 497 (LGDV…LPQG). 37–44 (GENGAGKS) contributes to the ATP binding site.

It belongs to the ABC transporter superfamily. Arabinose importer (TC 3.A.1.2.2) family. The complex is composed of two ATP-binding proteins (AraG), two transmembrane proteins (AraH) and a solute-binding protein (AraF).

It localises to the cell inner membrane. The enzyme catalyses L-arabinose(out) + ATP + H2O = L-arabinose(in) + ADP + phosphate + H(+). In terms of biological role, part of the ABC transporter complex AraFGH involved in arabinose import. Responsible for energy coupling to the transport system. The chain is Arabinose import ATP-binding protein AraG from Burkholderia pseudomallei (strain 1710b).